Consider the following 691-residue polypeptide: F-box/LRR-repeat protein 5 (691 aa).

Residues 1–159 form a hemerythrin-like region; it reads MAPFPEEVDV…IKKKVIAQHC (159 aa). Fe(3+) contacts are provided by H15, H57, E58, E61, H80, H126, and E130. One can recognise an F-box domain in the interval 202–248; sequence STGITHLPPEVMVSIFSYLNPQELCRCSQVSTKWSQLAKTGSLWKHL. 7 LRR repeats span residues 340–364, 365–392, 393–418, 479–508, 576–607, 608–635, and 636–661; these read SSAV…LDLT, QTDI…DLSG, CEKI…ESGL, VWML…CVME, TRLL…SLSG, CYQI…NLSG, and CLTV…YFYY. 4 residues coordinate [2Fe-2S] cluster: C662, C676, C686, and C687.

Part of a SCF (SKP1-cullin-F-box) protein ligase complex. Interacts with ACO1/IRP1, IREB2/IRP2; the interaction depends on the [2Fe-2S] cluster. Interacts with DCTN1/p150-glued. It depends on [2Fe-2S] cluster as a cofactor. Post-translationally, polybiquitinated upon iron and oxygen depletion, leading to its degradation by the proteasome. Ubiquitination is regulated by the hemerythrin-like region that acts as an oxygen and iron sensor. Undergoes constitutive ubiquitin-dependent degradation at the steady state by HERC2.

Its subcellular location is the cytoplasm. The protein resides in the perinuclear region. It is found in the nucleus. Its pathway is protein modification; protein ubiquitination. With respect to regulation, an iron-sulfur cluster promotes IRP2 polyubiquitination and degradation in response to both iron and oxygen concentrations. In terms of biological role, component of some SCF (SKP1-cullin-F-box) protein ligase complex that plays a central role in iron homeostasis by promoting the ubiquitination and subsequent degradation of IREB2/IRP2. The C-terminal domain of FBXL5 contains a redox-sensitive [2Fe-2S] cluster that, upon oxidation, promotes binding to IRP2 to effect its oxygen-dependent degradation. Under iron deficiency conditions, the N-terminal hemerythrin-like (Hr) region, which contains a diiron metal center, cannot bind iron and undergoes conformational changes that destabilize the FBXL5 protein and cause its ubiquitination and degradation. When intracellular iron levels start rising, the Hr region is stabilized. Additional increases in iron levels facilitate the assembly and incorporation of a redox active [2Fe-2S] cluster in the C-terminal domain. Only when oxygen level is high enough to maintain the cluster in its oxidized state can FBXL5 recruit IRP2 as a substrate for polyubiquination and degradation. Promotes ubiquitination and subsequent degradation of the dynactin complex component DCTN1. Within the nucleus, promotes the ubiquitination of SNAI1; preventing its interaction with DNA and promoting its degradation. Negatively regulates DNA damage response by mediating the ubiquitin-proteasome degradation of the DNA repair protein NABP2. The chain is F-box/LRR-repeat protein 5 (FBXL5) from Bos taurus (Bovine).